Consider the following 87-residue polypeptide: MANHKSAMKRIKQTAKRTERNKHERSTLRTFIKRVREAVATKDQEAAKAALAVAIPVIDGAATKGIIHSSNASRNVSRLTKLVNTLG.

Over residues 1 to 15 (MANHKSAMKRIKQTA) the composition is skewed to basic residues. The interval 1–27 (MANHKSAMKRIKQTAKRTERNKHERST) is disordered. A compositionally biased stretch (basic and acidic residues) spans 16 to 27 (KRTERNKHERST).

This sequence belongs to the bacterial ribosomal protein bS20 family.

Functionally, binds directly to 16S ribosomal RNA. The sequence is that of Small ribosomal subunit protein bS20 from Citrifermentans bemidjiense (strain ATCC BAA-1014 / DSM 16622 / JCM 12645 / Bem) (Geobacter bemidjiensis).